Here is a 187-residue protein sequence, read N- to C-terminus: MRLHRTNNSRRCTILLILALKIFDFVDTLACYSCIALNYRQNVLSRNDALSPPQNRENLTALFDVLSKNNISHVEVSSSCADVTLTTQPSFLNTPIAICDMNDKCVKMDFYYSGEKVVLRNCLSNLMETVNSPKLKKYCPMYSDDRSEIKVGPMSNVSVCSCQSDLCNSSEKSSVMIYFSIAFILVL.

The first 28 residues, 1-28, serve as a signal peptide directing secretion; that stretch reads MRLHRTNNSRRCTILLILALKIFDFVDT. N-linked (GlcNAc...) asparagine glycosylation is found at asparagine 58, asparagine 70, asparagine 156, and asparagine 168.

The protein resides in the secreted. This is an uncharacterized protein from Caenorhabditis elegans.